We begin with the raw amino-acid sequence, 238 residues long: Small ribosomal subunit protein uS2 (238 aa).

This sequence belongs to the universal ribosomal protein uS2 family.

This is Small ribosomal subunit protein uS2 from Chloroflexus aurantiacus (strain ATCC 29366 / DSM 635 / J-10-fl).